The primary structure comprises 368 residues: N-acetylneuraminate epimerase (368 aa).

The signal sequence occupies residues 1–19; it reads MNKTITALTIIMASFATNA. Kelch repeat units lie at residues 40–84, 86–137, 139–173, 174–219, 222–265, 287–336, and 338–367; these read TVYI…AFID, NLYV…FVHN, KAYV…KINA, HYFD…VNKG, TWLI…VAGG, ENYQ…PWNN, and LLII…VTVQ. Catalysis depends on Glu228, which acts as the Proton acceptor.

Belongs to the NanM family. As to quaternary structure, homodimer.

The protein localises to the periplasm. The enzyme catalyses N-acetyl-alpha-neuraminate = N-acetyl-beta-neuraminate. Its function is as follows. Converts alpha-N-acetylneuranimic acid (Neu5Ac) to the beta-anomer, accelerating the equilibrium between the alpha- and beta-anomers. Probably facilitates sialidase-negative bacteria to compete successfully for limited amounts of extracellular Neu5Ac, which is likely taken up in the beta-anomer. In addition, the rapid removal of sialic acid from solution might be advantageous to the bacterium to damp down host responses. In Escherichia coli O1:K1 / APEC, this protein is N-acetylneuraminate epimerase.